Reading from the N-terminus, the 91-residue chain is Small ribosomal subunit protein bS16 (91 aa).

This sequence belongs to the bacterial ribosomal protein bS16 family.

The sequence is that of Small ribosomal subunit protein bS16 from Streptococcus mutans serotype c (strain ATCC 700610 / UA159).